The sequence spans 451 residues: Oxygen-independent coproporphyrinogen III oxidase (451 aa).

The region spanning 45–278 is the Radical SAM core domain; that stretch reads IPAGAAISLY…FETARELFLA (234 aa). Tyr54 contributes to the S-adenosyl-L-methionine binding site. 2 residues coordinate [4Fe-4S] cluster: Cys60 and Cys64. Phe66 contacts S-adenosyl-L-methionine. Cys67 lines the [4Fe-4S] cluster pocket. Residues Gly111, 112–113, Glu144, Gln171, Arg183, Asp208, Ala242, and Ile328 each bind S-adenosyl-L-methionine; that span reads GT.

Belongs to the anaerobic coproporphyrinogen-III oxidase family. Monomer. [4Fe-4S] cluster is required as a cofactor.

The protein localises to the cytoplasm. It carries out the reaction coproporphyrinogen III + 2 S-adenosyl-L-methionine = protoporphyrinogen IX + 2 5'-deoxyadenosine + 2 L-methionine + 2 CO2. The protein operates within porphyrin-containing compound metabolism; protoporphyrin-IX biosynthesis; protoporphyrinogen-IX from coproporphyrinogen-III (AdoMet route): step 1/1. Functionally, involved in the heme biosynthesis. Catalyzes the anaerobic oxidative decarboxylation of propionate groups of rings A and B of coproporphyrinogen III to yield the vinyl groups in protoporphyrinogen IX. This chain is Oxygen-independent coproporphyrinogen III oxidase (hemN), found in Paracoccus denitrificans (strain Pd 1222).